Reading from the N-terminus, the 575-residue chain is Serine/threonine-protein kinase STY46 (575 aa).

Positions 116-140 (ADLDSTSNDAGHSSPTRKSIHPPPA) are disordered. Over residues 118 to 132 (LDSTSNDAGHSSPTR) the composition is skewed to polar residues. Positions 178–252 (EITFSTEDKP…AKIELQSQSW (75 aa)) constitute an ACT domain. One can recognise a Protein kinase domain in the interval 290-543 (LKFGHKIASG…EIIEQLQEIA (254 aa)). Residues 296-304 (IASGSYGDL) and Lys-317 contribute to the ATP site. Asp-411 functions as the Proton acceptor in the catalytic mechanism. At Thr-443 the chain carries Phosphothreonine.

This sequence belongs to the protein kinase superfamily. Ser/Thr protein kinase family. In terms of processing, autophosphorylated on serine and threonine residues. Autophosphorylated at Thr-443.

Its subcellular location is the cytoplasm. The protein localises to the cytosol. It carries out the reaction L-seryl-[protein] + ATP = O-phospho-L-seryl-[protein] + ADP + H(+). The catalysed reaction is L-threonyl-[protein] + ATP = O-phospho-L-threonyl-[protein] + ADP + H(+). Activated by autophosphorylation at Thr-443. In terms of biological role, serine/threonine protein kinase that specifically phosphorylates chloroplast precursor proteins in the cytosol within the cleavable presequences (transit peptides). May be part of a cytosolic regulatory network involved in chloroplast protein import. Does not phosphorylate mitochondrion precursor proteins. Specific for ATP and does not utilize other NTPs. Plays a role in chloroplast biogenesis and differentiation in cotyledons, possibly through phosphorylation of chloroplast preproteins. The chain is Serine/threonine-protein kinase STY46 from Arabidopsis thaliana (Mouse-ear cress).